The sequence spans 152 residues: 3-dehydroquinate dehydratase (152 aa).

Tyr26 serves as the catalytic Proton acceptor. Substrate is bound by residues Asn78, His84, and Asp91. The Proton donor role is filled by His104. Substrate is bound by residues 105-106 and Arg115; that span reads IS.

Belongs to the type-II 3-dehydroquinase family. In terms of assembly, homododecamer.

It catalyses the reaction 3-dehydroquinate = 3-dehydroshikimate + H2O. The protein operates within metabolic intermediate biosynthesis; chorismate biosynthesis; chorismate from D-erythrose 4-phosphate and phosphoenolpyruvate: step 3/7. In terms of biological role, catalyzes a trans-dehydration via an enolate intermediate. The chain is 3-dehydroquinate dehydratase from Buchnera aphidicola subsp. Cinara cedri (strain Cc).